The sequence spans 611 residues: Leukotriene A-4 hydrolase (611 aa).

N6-acetyllysine is present on Lys-73. A peptide contacts are provided by residues 135-137 (QCQ) and 267-272 (PYGGME). His-296 is a binding site for Zn(2+). Glu-297 serves as the catalytic Proton acceptor. 2 residues coordinate Zn(2+): His-300 and Glu-319. At Lys-337 the chain carries N6-acetyllysine. Catalysis depends on Tyr-384, which acts as the Proton donor. Residue Lys-414 is modified to N6-acetyllysine. Ser-416 is modified (phosphoserine). 564 to 566 (RMK) lines the a peptide pocket. Lys-573 is subject to N6-acetyllysine.

The protein belongs to the peptidase M1 family. As to quaternary structure, monomer. Zn(2+) serves as cofactor. Phosphorylation at Ser-416 inhibits leukotriene-A4 hydrolase activity. activity.

The protein localises to the cytoplasm. The enzyme catalyses leukotriene A4 + H2O = leukotriene B4. It catalyses the reaction (5S,6S)-epoxy-(18R)-hydroxy-(7E,9E,11Z,14Z,16E)-eicosapentaenoate + H2O = resolvin E1. It carries out the reaction (5S,6S)-epoxy-(18S)-hydroxy-(7E,9E,11Z,14Z,16E)-eicosapentaenoate + H2O = 18S-resolvin E1. The catalysed reaction is Release of the N-terminal residue from a tripeptide.. Its pathway is lipid metabolism; leukotriene B4 biosynthesis. Its activity is regulated as follows. Inhibited by bestatin. The epoxide hydrolase activity is restrained by suicide inactivation that involves binding of LTA4 to Tyr-379. 4-(4-benzylphenyl)thiazol-2-amine (ARM1) selectively inhibits the epoxide hydrolase activity. Its function is as follows. Bifunctional zinc metalloenzyme that comprises both epoxide hydrolase (EH) and aminopeptidase activities. Acts as an epoxide hydrolase to catalyze the conversion of LTA4 to the pro-inflammatory mediator leukotriene B4 (LTB4). Also has aminopeptidase activity, with high affinity for N-terminal arginines of various synthetic tripeptides. In addition to its pro-inflammatory EH activity, may also counteract inflammation by its aminopeptidase activity, which inactivates by cleavage another neutrophil attractant, the tripeptide Pro-Gly-Pro (PGP), a bioactive fragment of collagen generated by the action of matrix metalloproteinase-9 (MMP9) and prolylendopeptidase (PREPL). Involved also in the biosynthesis of resolvin E1 and 18S-resolvin E1 from eicosapentaenoic acid, two lipid mediators that show potent anti-inflammatory and pro-resolving actions. The protein is Leukotriene A-4 hydrolase (LTA4H) of Bos taurus (Bovine).